Here is a 275-residue protein sequence, read N- to C-terminus: Dermonecrotic toxin SpeSicTox-betaIIA3ii (275 aa).

Residue H5 is part of the active site. E25 and D27 together coordinate Mg(2+). The Nucleophile role is filled by H41. 2 cysteine pairs are disulfide-bonded: C45/C51 and C47/C190. D85 is a Mg(2+) binding site.

It belongs to the arthropod phospholipase D family. Class II subfamily. It depends on Mg(2+) as a cofactor. Expressed by the venom gland.

The protein localises to the secreted. The enzyme catalyses an N-(acyl)-sphingosylphosphocholine = an N-(acyl)-sphingosyl-1,3-cyclic phosphate + choline. The catalysed reaction is an N-(acyl)-sphingosylphosphoethanolamine = an N-(acyl)-sphingosyl-1,3-cyclic phosphate + ethanolamine. It catalyses the reaction a 1-acyl-sn-glycero-3-phosphocholine = a 1-acyl-sn-glycero-2,3-cyclic phosphate + choline. It carries out the reaction a 1-acyl-sn-glycero-3-phosphoethanolamine = a 1-acyl-sn-glycero-2,3-cyclic phosphate + ethanolamine. Its function is as follows. Dermonecrotic toxins cleave the phosphodiester linkage between the phosphate and headgroup of certain phospholipids (sphingolipid and lysolipid substrates), forming an alcohol (often choline) and a cyclic phosphate. This toxin acts on sphingomyelin (SM). It may also act on ceramide phosphoethanolamine (CPE), lysophosphatidylcholine (LPC) and lysophosphatidylethanolamine (LPE), but not on lysophosphatidylserine (LPS), and lysophosphatidylglycerol (LPG). It acts by transphosphatidylation, releasing exclusively cyclic phosphate products as second products. Induces dermonecrosis, hemolysis, increased vascular permeability, edema, inflammatory response, and platelet aggregation. The sequence is that of Dermonecrotic toxin SpeSicTox-betaIIA3ii from Sicarius peruensis (Six-eyed sand spider).